We begin with the raw amino-acid sequence, 95 residues long: Aspartyl/glutamyl-tRNA(Asn/Gln) amidotransferase subunit C (95 aa).

This sequence belongs to the GatC family. Heterotrimer of A, B and C subunits.

The catalysed reaction is L-glutamyl-tRNA(Gln) + L-glutamine + ATP + H2O = L-glutaminyl-tRNA(Gln) + L-glutamate + ADP + phosphate + H(+). It catalyses the reaction L-aspartyl-tRNA(Asn) + L-glutamine + ATP + H2O = L-asparaginyl-tRNA(Asn) + L-glutamate + ADP + phosphate + 2 H(+). Functionally, allows the formation of correctly charged Asn-tRNA(Asn) or Gln-tRNA(Gln) through the transamidation of misacylated Asp-tRNA(Asn) or Glu-tRNA(Gln) in organisms which lack either or both of asparaginyl-tRNA or glutaminyl-tRNA synthetases. The reaction takes place in the presence of glutamine and ATP through an activated phospho-Asp-tRNA(Asn) or phospho-Glu-tRNA(Gln). The sequence is that of Aspartyl/glutamyl-tRNA(Asn/Gln) amidotransferase subunit C from Geotalea daltonii (strain DSM 22248 / JCM 15807 / FRC-32) (Geobacter daltonii).